The following is a 511-amino-acid chain: Immunoglobulin-binding protein EibD (511 aa).

The first 26 residues, 1–26, serve as a signal peptide directing secretion; it reads MSKKFTMTLLSSSLAGLLVMSGGVSA. The tract at residues 27 to 417 is surface exposed passenger domain; sequence QNGTYSVLQD…SKAIAANTRT (391 aa). Over 27 to 460 the chain is Extracellular; it reads QNGTYSVLQD…GLFQPYSVGK (434 aa). Residues 161-287 are head domain; that stretch reads DAKASGEFSV…TGTESDKTYG (127 aa). Residues 288-303 are neck; it reads TRVLGGLSDGTRNSDA. The right-handed coiled-coil (RHcc) stretch occupies residues 304-349; that stretch reads ATVGQLNRKVGGVYDDVKARITVESEKQKKYTDQKTSEVNEKVEAR. Residues 304-349 are a coiled coil; it reads ATVGQLNRKVGGVYDDVKARITVESEKQKKYTDQKTSEVNEKVEAR. Residues 329 to 344 form a required to bind IgA region; the sequence is EKQKKYTDQKTSEVNE. The segment at 350–375 is saddle domain; it reads TTVGVDSDGKLTRAEGATKTIAVNDG. Residues 376–441 are a coiled coil; the sequence is LVALSGRTDR…INENHKEMKR (66 aa). Residues 376-441 are left-handed coiled-coil (LHcc); it reads LVALSGRTDR…INENHKEMKR (66 aa). A required to bind IgG region spans residues 384–418; that stretch reads DRIDYAVGAIDGRVTRNTQSIEKNSKAIAANTRTL. Residues 418-460 form an outer membrane translocation of the passenger domain region; that stretch reads LQQHSARLDSQQRQINENHKEMKRAAAQSAALTGLFQPYSVGK. 4 beta stranded membrane passes run 461 to 471, 474 to 485, 488 to 497, and 501 to 511; these read FNATAAVGGYS, QALAVGVGYRFN, TAAKAGVAFS, and ASWNVGVNFEF. Residues 461-511 form a translocator domain region; it reads FNATAAVGGYSDQQALAVGVGYRFNEQTAAKAGVAFSDGDASWNVGVNFEF.

This sequence belongs to the autotransporter-2 (AT-2) (TC 1.B.40) family. Eib subfamily. In terms of assembly, homotrimer; can probably form mixed heterotrimers in vivo. Will form mixed heterotrimers with EibA or EibC; these are correctly located in the outer membrane and bind IgG Fc, although less well than homotrimers. In denaturing gels runs as a band of about 210 kDa. Binds the Fc portion of immunoglobulins; binds more than 1 Fc per subunit, can be modeled to bind 3 Fc per trimer.

The protein localises to the cell surface. It is found in the cell outer membrane. In terms of biological role, binds (in a non-immune fashion) to the Fc portion of human IgA and IgG; binding occurs on the cell surface. Confers the ability to survive exposure to human serum exposure. Binds to the Fc portion of human IgG, IgA and to whole mouse antibodies also via Fc. Upon overexpression cells acquire an extra cell surface layer that forms a zipper-like contact between cells; cells autoagglutinate and form biofilm more readily, suggesting it may play a role in defense against a host. This chain is Immunoglobulin-binding protein EibD, found in Escherichia coli.